The chain runs to 95 residues: Large ribosomal subunit protein bL25 (95 aa).

The protein belongs to the bacterial ribosomal protein bL25 family. Part of the 50S ribosomal subunit; part of the 5S rRNA/L5/L18/L25 subcomplex. Contacts the 5S rRNA. Binds to the 5S rRNA independently of L5 and L18.

In terms of biological role, this is one of the proteins that binds to the 5S RNA in the ribosome where it forms part of the central protuberance. The chain is Large ribosomal subunit protein bL25 from Buchnera aphidicola subsp. Acyrthosiphon pisum (strain 5A).